A 75-amino-acid polypeptide reads, in one-letter code: Small ribosomal subunit protein bS18 (75 aa).

This sequence belongs to the bacterial ribosomal protein bS18 family. Part of the 30S ribosomal subunit. Forms a tight heterodimer with protein bS6.

In terms of biological role, binds as a heterodimer with protein bS6 to the central domain of the 16S rRNA, where it helps stabilize the platform of the 30S subunit. This Hydrogenovibrio crunogenus (strain DSM 25203 / XCL-2) (Thiomicrospira crunogena) protein is Small ribosomal subunit protein bS18.